Here is a 109-residue protein sequence, read N- to C-terminus: MAASAARGAAALRRSINQPVAFVRRIPWTAASSQLKEHFAQFGHVRRCILPFDKETGFHRGLGWVQFSSEEGLRNALQQENHIIDGVKVQVHTRRPKLPQTSDDEKKDF.

The residue at position 15 (serine 15) is a Phosphoserine. Residues proline 19–aspartate 103 enclose the RRM domain. The residue at position 101 (threonine 101) is a Phosphothreonine. Serine 102 is modified (phosphoserine).

As to expression, ubiquitously expressed, with highest level in heart, liver, skeletal muscle and testis.

The protein localises to the mitochondrion. Its subcellular location is the nucleus. Its function is as follows. RNA-binding protein that acts as a nuclear receptor corepressor. Probably acts by binding the SRA RNA, and repressing the SRA-mediated nuclear receptor coactivation. Binds the STR7 loop of SRA RNA. Also able to repress glucocorticoid (GR), androgen (AR), thyroid (TR) and VDR-mediated transactivation. This is SRA stem-loop-interacting RNA-binding protein, mitochondrial (SLIRP) from Homo sapiens (Human).